Here is a 490-residue protein sequence, read N- to C-terminus: One cut domain family member 3 (490 aa).

Disordered regions lie at residues 130–155, 193–213, and 287–316; these read GAHG…QRLA, LSPL…PPPP, and HGPH…AAAE. Over residues 143–152 the composition is skewed to pro residues; sequence ATAPPPPPPQ. Over residues 290-311 the composition is skewed to gly residues; that stretch reads HSGGGGPGGGGGAGGGSGGPGA. The segment at residues 309 to 395 is a DNA-binding region (CUT); the sequence is PGAGAAAEEI…QRMSALRLAA (87 aa). A DNA-binding region (homeobox) is located at residues 411-470; that stretch reads PKKQRLVFTDLQRRTLIAIFKENKRPSKEMQATISQQLGLELNTVSNFFMNARRRCMNRW.

Belongs to the CUT homeobox family. Specifically expressed in brain, stomach and gut. Within the gut, expressed only in duodenum and jejunum.

Its subcellular location is the nucleus. Transcriptional activator. Binds the consensus DNA sequence 5'-DHWATTGAYTWWD-3' on a variety of gene promoters such as those of HNF3B and TTR. In Mus musculus (Mouse), this protein is One cut domain family member 3 (Onecut3).